The primary structure comprises 396 residues: 8-amino-7-oxononanoate synthase (396 aa).

Arg29 is a binding site for substrate. Pyridoxal 5'-phosphate is bound at residue 116-117 (GY). Residue His141 participates in substrate binding. Residues Ser187, His215, and Thr243 each contribute to the pyridoxal 5'-phosphate site. An N6-(pyridoxal phosphate)lysine modification is found at Lys246. Thr360 lines the substrate pocket.

Belongs to the class-II pyridoxal-phosphate-dependent aminotransferase family. BioF subfamily. Homodimer. Requires pyridoxal 5'-phosphate as cofactor.

It catalyses the reaction 6-carboxyhexanoyl-[ACP] + L-alanine + H(+) = (8S)-8-amino-7-oxononanoate + holo-[ACP] + CO2. It participates in cofactor biosynthesis; biotin biosynthesis. Functionally, catalyzes the decarboxylative condensation of pimeloyl-[acyl-carrier protein] and L-alanine to produce 8-amino-7-oxononanoate (AON), [acyl-carrier protein], and carbon dioxide. This chain is 8-amino-7-oxononanoate synthase, found in Nitrosospira multiformis (strain ATCC 25196 / NCIMB 11849 / C 71).